The primary structure comprises 315 residues: Small ribosomal subunit protein uS2 (315 aa).

A disordered region spans residues 250-315 (LLEQGDAAKA…TESEKAPVSE (66 aa)). Basic and acidic residues-rich tracts occupy residues 272 to 282 (VSAKNEAKSED) and 297 to 315 (TEAKIEAEATESEKAPVSE).

Belongs to the universal ribosomal protein uS2 family.

The protein is Small ribosomal subunit protein uS2 of Clavibacter michiganensis subsp. michiganensis (strain NCPPB 382).